The sequence spans 643 residues: Melanoma-associated antigen C3 (643 aa).

MAGE domains are found at residues 184 to 384 and 456 to 643; these read LDEK…AAGM and LDEK…FCPE. Residues 347–421 are disordered; it reads NPQGLAGHRQ…PQSPLDSCSS (75 aa). Over residues 354–363 the composition is skewed to basic and acidic residues; sequence HRQEDGRRGL. The span at 383 to 414 shows a compositional bias: pro residues; the sequence is GMPPLPQSPPEIPPQGPPKISPQGPPQSPPQS. Phosphothreonine occurs at positions 478, 484, and 485.

Expressed in testis. Not expressed in other normal tissues, but is expressed in tumors of different histological origins.

The sequence is that of Melanoma-associated antigen C3 (MAGEC3) from Homo sapiens (Human).